Here is a 460-residue protein sequence, read N- to C-terminus: Cysteine--tRNA ligase (460 aa).

C29 serves as a coordination point for Zn(2+). The 'HIGH' region signature appears at 31 to 41; the sequence is MTIYDLCHIGH. Residues C213, H238, and E242 each coordinate Zn(2+). The 'KMSKS' region motif lies at 270–274; the sequence is KMSKS. K273 lines the ATP pocket.

The protein belongs to the class-I aminoacyl-tRNA synthetase family. As to quaternary structure, monomer. Zn(2+) is required as a cofactor.

The protein localises to the cytoplasm. The catalysed reaction is tRNA(Cys) + L-cysteine + ATP = L-cysteinyl-tRNA(Cys) + AMP + diphosphate. This Verminephrobacter eiseniae (strain EF01-2) protein is Cysteine--tRNA ligase.